The chain runs to 771 residues: Probable dipeptidyl peptidase 4 (771 aa).

The signal sequence occupies residues 1–16 (MKYSKLLLLLVSVVQA). Residues Asn-37, Asn-80, Asn-114, Asn-173, Asn-222, Asn-470, and Asn-495 are each glycosylated (N-linked (GlcNAc...) asparagine). Active-site charge relay system residues include Ser-618, Asp-695, and His-730.

This sequence belongs to the peptidase S9B family.

The protein localises to the secreted. It carries out the reaction Release of an N-terminal dipeptide, Xaa-Yaa-|-Zaa-, from a polypeptide, preferentially when Yaa is Pro, provided Zaa is neither Pro nor hydroxyproline.. Extracellular dipeptidyl-peptidase which removes N-terminal dipeptides sequentially from polypeptides having unsubstituted N-termini provided that the penultimate residue is proline. This chain is Probable dipeptidyl peptidase 4 (dpp4), found in Aspergillus flavus (strain ATCC 200026 / FGSC A1120 / IAM 13836 / NRRL 3357 / JCM 12722 / SRRC 167).